The sequence spans 122 residues: Large ribosomal subunit protein uL14c (122 aa).

It belongs to the universal ribosomal protein uL14 family. As to quaternary structure, part of the 50S ribosomal subunit.

It localises to the plastid. The protein resides in the chloroplast. Functionally, binds to 23S rRNA. The chain is Large ribosomal subunit protein uL14c from Populus alba (White poplar).